The chain runs to 246 residues: Octanoyltransferase (246 aa).

The BPL/LPL catalytic domain maps to 30-227 (GRIGNTLLLL…QFGRVFGHQV (198 aa)). Residues 75 to 82 (RGGDVTYH), 155 to 157 (AIG), and 168 to 170 (GFA) each bind substrate. Cysteine 186 functions as the Acyl-thioester intermediate in the catalytic mechanism.

The protein belongs to the LipB family.

It localises to the cytoplasm. It carries out the reaction octanoyl-[ACP] + L-lysyl-[protein] = N(6)-octanoyl-L-lysyl-[protein] + holo-[ACP] + H(+). It participates in protein modification; protein lipoylation via endogenous pathway; protein N(6)-(lipoyl)lysine from octanoyl-[acyl-carrier-protein]: step 1/2. In terms of biological role, catalyzes the transfer of endogenously produced octanoic acid from octanoyl-acyl-carrier-protein onto the lipoyl domains of lipoate-dependent enzymes. Lipoyl-ACP can also act as a substrate although octanoyl-ACP is likely to be the physiological substrate. The sequence is that of Octanoyltransferase from Acidobacterium capsulatum (strain ATCC 51196 / DSM 11244 / BCRC 80197 / JCM 7670 / NBRC 15755 / NCIMB 13165 / 161).